The following is a 271-amino-acid chain: Phospholipid scramblase family member 5 (271 aa).

The segment covering 1 to 10 (MASKDAQNQR) has biased composition (polar residues). Residues 1 to 33 (MASKDAQNQRRGLPGFLPGAPDPDQSLPASSNP) form a disordered region. Residues 1–45 (MASKDAQNQRRGLPGFLPGAPDPDQSLPASSNPGNQAWQLSLPLP) are proline-rich domain (PRD).

This sequence belongs to the phospholipid scramblase family.

This Homo sapiens (Human) protein is Phospholipid scramblase family member 5 (PLSCR5).